The following is a 119-amino-acid chain: Small ribosomal subunit protein bS6 (119 aa).

The segment at 96 to 119 (VTEPSPLARSQEKDEEEGGRTAEA) is disordered.

The protein belongs to the bacterial ribosomal protein bS6 family.

Functionally, binds together with bS18 to 16S ribosomal RNA. The sequence is that of Small ribosomal subunit protein bS6 from Alkalilimnicola ehrlichii (strain ATCC BAA-1101 / DSM 17681 / MLHE-1).